We begin with the raw amino-acid sequence, 112 residues long: Cytochrome c2 (112 aa).

Heme c-binding residues include C14, C17, H18, and M91.

It belongs to the cytochrome c family. In terms of processing, binds 1 heme c group covalently per subunit.

Functionally, cytochrome c2 is found mainly in purple, non-sulfur, photosynthetic bacteria where it functions as the electron donor to the oxidized bacteriochlorophyll in the photophosphorylation pathway. However, it may also have a role in the respiratory chain and is found in some non-photosynthetic bacteria. The protein is Cytochrome c2 (cycA) of Rhodospirillum rubrum.